A 505-amino-acid chain; its full sequence is MSQHVMFNAVLSSHPALFIQGEWRIGNGVSFEKQDPMSQQRLWQARAADHTDVTLACHAARAAFPAWARASLEQRATVIQQFAALLEQHKQSLARTISLETSKPYWETLTEVQAMIGKVAISLQAYQTRTGHSQTPMGDSMSVLRHRPHGVLAVFGPYNFPGHLPNGHIVPALLAGNTVVFKPSELTPWTAEETVKLWQQAGIPDGVLNLVQGGRETGEALAAQPDIDGLLFTGSAHTGYHLHRQLAGQPEKMLALEMGGNNALIVEQVKDRDAVVNLAIQSPFISAGQRCTCSRRLLVKTGAEGDAFLLRFTAVAQALRIGRWDEQPAPFMGAVISSQAAERMLAAQQHLLLLGGESLLNMTRPDSQSALLTPGIIDITNISEVPDEEYFGPLVSVIRYTDFTEALKIANQTRFGLAVGLVSEDRQQFEQLLLEARAGIVNWNKPLTGASSAAPFGGVGASGNHRPSAFYAADYCAWPMASLECEHLTLPATLSPGISFDLPKV.

234 to 239 (GSAHTG) provides a ligand contact to NAD(+). Catalysis depends on residues glutamate 257 and cysteine 291.

The protein belongs to the aldehyde dehydrogenase family. AstD subfamily.

The enzyme catalyses N-succinyl-L-glutamate 5-semialdehyde + NAD(+) + H2O = N-succinyl-L-glutamate + NADH + 2 H(+). Its pathway is amino-acid degradation; L-arginine degradation via AST pathway; L-glutamate and succinate from L-arginine: step 4/5. Catalyzes the NAD-dependent reduction of succinylglutamate semialdehyde into succinylglutamate. The polypeptide is N-succinylglutamate 5-semialdehyde dehydrogenase (Yersinia pestis (strain Pestoides F)).